Here is a 517-residue protein sequence, read N- to C-terminus: MIESLIALIAAIVGLGIGYLVAKKINDAKYEIFVEQAKAKAKAIEYEAELILKDAKNSILNAELEVKKKYEEKTHKFQKDFNQKFDDLSKKEQKLQQEEEKLKEDKEYLCKSQKHIQNLQSDVDKLKNKYQEKLDDVLKILEHSTGLTQNEAKEIILKKVEENSREQIAHIVRKYEEEAKNEAKRKANFIIAQATSRFAGEFAAERLINVINIKNDELKGRIIGKEGRNVKTLEMVLGVDIIIDDTPGAIIVSCFNLYRRAIATKVIELLVEDGRIQPARIEEIHEKVCKEFDSAILEEGETIVMDLGLNKIHPEIVKLIGKLKYRASYGQNALAHSLEVAHLAGIIAAECGGDENLARRAGILHDIGKALTHDFEGSHVDLGAELCKRYKEHPVVINAIYAHHGHEEATSIESAAVCAADTLSAARPGARREVLEAFLKRVSELEDIAKSKEGIKNAYAINAGREIRVIANAQLVNDDESVLLAKEIAAEIQEKMQYPGEIKVNVIRELRAVEYAK.

Residues 1 to 21 (MIESLIALIAAIVGLGIGYLV) form a helical membrane-spanning segment. The KH domain occupies 207–273 (LINVINIKND…TKVIELLVED (67 aa)). The 94-residue stretch at 333 to 426 (ALAHSLEVAH…VCAADTLSAA (94 aa)) folds into the HD domain.

This sequence belongs to the RNase Y family.

The protein resides in the cell membrane. In terms of biological role, endoribonuclease that initiates mRNA decay. This Campylobacter jejuni subsp. jejuni serotype O:2 (strain ATCC 700819 / NCTC 11168) protein is Ribonuclease Y.